A 194-amino-acid polypeptide reads, in one-letter code: Thymidine kinase (194 aa).

ATP is bound by residues 15–22 and 89–92; these read GPMFSGKS and DEAH. Glu-90 acts as the Proton acceptor in catalysis. Cys-146, Cys-149, Cys-178, and Cys-181 together coordinate Zn(2+).

It belongs to the thymidine kinase family. In terms of assembly, homotetramer.

The protein resides in the cytoplasm. The catalysed reaction is thymidine + ATP = dTMP + ADP + H(+). In Metamycoplasma arthritidis (strain 158L3-1) (Mycoplasma arthritidis), this protein is Thymidine kinase.